The sequence spans 391 residues: Putative neutrophil cytosol factor 1B (391 aa).

The region spanning 1–126 (MGDTFIRHIA…DFFKVRPDDL (126 aa)) is the PX domain. 2 consecutive SH3 domains span residues 157 to 216 (IILQ…PLDS) and 227 to 286 (YAGE…KSGQ). Positions 286 to 391 (QDVSQAQRQI…STKRKLASAV (106 aa)) are disordered. Phosphoserine occurs at positions 304 and 305. Residues 310–319 (HSIHQRSRKR) are compositionally biased toward basic residues. A phosphoserine mark is found at S321, S329, S346, and S349.

The protein resides in the cytoplasm. In terms of biological role, may be required for activation of the latent NADPH oxidase (necessary for superoxide production). The sequence is that of Putative neutrophil cytosol factor 1B (NCF1B) from Homo sapiens (Human).